Consider the following 208-residue polypeptide: Urease accessory protein UreG (208 aa).

12 to 19 (GPVGAGKT) contacts GTP.

This sequence belongs to the SIMIBI class G3E GTPase family. UreG subfamily. In terms of assembly, homodimer. UreD, UreF and UreG form a complex that acts as a GTP-hydrolysis-dependent molecular chaperone, activating the urease apoprotein by helping to assemble the nickel containing metallocenter of UreC. The UreE protein probably delivers the nickel.

Its subcellular location is the cytoplasm. Facilitates the functional incorporation of the urease nickel metallocenter. This process requires GTP hydrolysis, probably effectuated by UreG. The sequence is that of Urease accessory protein UreG from Rhodobacter capsulatus (Rhodopseudomonas capsulata).